The chain runs to 361 residues: Phosphoribosylformylglycinamidine cyclo-ligase (361 aa).

Belongs to the AIR synthase family.

It is found in the cytoplasm. The catalysed reaction is 2-formamido-N(1)-(5-O-phospho-beta-D-ribosyl)acetamidine + ATP = 5-amino-1-(5-phospho-beta-D-ribosyl)imidazole + ADP + phosphate + H(+). It participates in purine metabolism; IMP biosynthesis via de novo pathway; 5-amino-1-(5-phospho-D-ribosyl)imidazole from N(2)-formyl-N(1)-(5-phospho-D-ribosyl)glycinamide: step 2/2. The polypeptide is Phosphoribosylformylglycinamidine cyclo-ligase (Bartonella quintana (strain Toulouse) (Rochalimaea quintana)).